Reading from the N-terminus, the 867-residue chain is Glucans biosynthesis glucosyltransferase H (867 aa).

A disordered region spans residues 71–91 (DDEGRTQLETMPKATRSSISP). A run of 6 helical transmembrane segments spans residues 139–156 (YILL…TWYM), 194–216 (ILIL…LMGF), 518–540 (VMSY…LQVV), 568–590 (IALL…LLIW), 603–625 (VTIS…MLFH), and 680–702 (FLFW…VFSS).

Belongs to the glycosyltransferase 2 family. OpgH subfamily.

It localises to the cell inner membrane. It functions in the pathway glycan metabolism; osmoregulated periplasmic glucan (OPG) biosynthesis. Functionally, involved in the biosynthesis of osmoregulated periplasmic glucans (OPGs). The sequence is that of Glucans biosynthesis glucosyltransferase H from Nitrosomonas europaea (strain ATCC 19718 / CIP 103999 / KCTC 2705 / NBRC 14298).